The following is a 274-amino-acid chain: Cytochrome c oxidase subunit 3 (274 aa).

At 2-15 (AHVKNHDYQILPPS) the chain is on the cytoplasmic side. The helical transmembrane segment at 16–36 (IWPFFGAIGAFVMLTGAVAWM) threads the bilayer. The Periplasmic portion of the chain corresponds to 37 to 48 (KGITFFGLPVEG). The chain crosses the membrane as a helical span at residues 49–77 (PWMFLIGLVGVLYVMFGWWADVVNEGETG). The Cytoplasmic segment spans residues 78-79 (EH). The helical transmembrane segment at 80 to 115 (TPVVRIGLQYGFILFIMSEVMFFVAWFWAFIKNALY) threads the bilayer. The Periplasmic segment spans residues 116-139 (PMGPDSPIKDGVWPPEGIVTFDPW). The chain crosses the membrane as a helical span at residues 140 to 166 (HLPLINTLILLLSGVAVTWAHHAFVLE). The Cytoplasmic segment spans residues 167 to 168 (GD). The chain crosses the membrane as a helical span at residues 169–197 (RKTTINGLIVAVILGVCFTGLQAYEYSHA). Residues 198–203 (AFGLAD) are Periplasmic-facing. A helical transmembrane segment spans residues 204 to 237 (TVYAGAFYMATGFHGAHVIIGTIFLFVCLIRLLK). The Cytoplasmic segment spans residues 238-244 (GQMTQKQ). Residues 245–274 (HVGFEAAAWYWHFVDVVWLFLFVVIYIWGR) form a helical membrane-spanning segment.

It belongs to the cytochrome c oxidase subunit 3 family.

It localises to the cell inner membrane. The catalysed reaction is 4 Fe(II)-[cytochrome c] + O2 + 8 H(+)(in) = 4 Fe(III)-[cytochrome c] + 2 H2O + 4 H(+)(out). The polypeptide is Cytochrome c oxidase subunit 3 (ctaE) (Paracoccus denitrificans).